A 295-amino-acid chain; its full sequence is G1/S-specific cyclin-D1 (295 aa).

One can recognise a Cyclin N-terminal domain in the interval 28–152; sequence LRAMLKAEET…LLVNKLKWNL (125 aa). Residues 262-295 form a disordered region; it reads AQQNMDPKAAEEEEEEEEEVDLACTPTDVRDVDI. Lys269 is covalently cross-linked (Glycyl lysine isopeptide (Lys-Gly) (interchain with G-Cter in ubiquitin)). Residues 272 to 282 are compositionally biased toward acidic residues; sequence EEEEEEEEEVD. Thr286 bears the Phosphothreonine mark.

The protein belongs to the cyclin family. Cyclin D subfamily. Interacts with either CDK4 or CDK6 protein kinase to form a serine/threonine kinase holoenzyme complex. The cyclin subunit imparts substrate specificity to the complex. Component of the ternary complex CCND1/CDK4/CDKN1B required for nuclear translocation and modulation of CDK4-mediated kinase activity. Interacts directly with CDKN1B. Can form similar complexes with either CDKN1A or CDKN2A. Interacts with UHRF2; the interaction ubiquitinates CCND1 and appears to occur independently of phosphorylation. Interacts with USP2. Interacts (via cyclin N-terminal domain) with INSM1 (via N-terminal region); the interaction competes with the binding of CCND1 to CDK4 during cell cycle progression and inhibits CDK4 activity. Interacts with CDK4; the interaction is prevented with the binding of CCND1 to INSM1 during cell cycle progression. Phosphorylation at Thr-286 by MAP kinases is required for ubiquitination and degradation by the DCX(AMBRA1) complex. It also plays an essential role for recognition by the FBXO31 component of SCF (SKP1-cullin-F-box) protein ligase complex following DNA damage. Post-translationally, ubiquitinated at Lys-269 by the DCX(AMBRA1) complex during the transition from G1 to S cell phase, leading to its degradation: ubiquitination is dependent on Thr-286 phosphorylation. The DCX(AMBRA1) complex represents the major regulator of CCND1 stability during the G1/S transition. Also ubiquitinated by the SCF(FBXO4) and Cul7-RING(FBXW8) ubiquitin-protein ligase complexes. Following DNA damage it is ubiquitinated by the SCF(FBXO31) protein ligase complex. SCF(FBXO31) ubiquitination is dependent on Thr-286 phosphorylation. Ubiquitinated also by UHRF2 apparently in a phosphorylation-independent manner. Ubiquitination leads to its degradation and G1 arrest. Deubiquitinated by USP2; leading to its stabilization.

The protein localises to the nucleus. The protein resides in the cytoplasm. Its subcellular location is the nucleus membrane. Its function is as follows. Regulatory component of the cyclin D1-CDK4 (DC) complex that phosphorylates and inhibits members of the retinoblastoma (RB) protein family including RB1 and regulates the cell-cycle during G(1)/S transition. Phosphorylation of RB1 allows dissociation of the transcription factor E2F from the RB/E2F complex and the subsequent transcription of E2F target genes which are responsible for the progression through the G(1) phase. Hypophosphorylates RB1 in early G(1) phase. Cyclin D-CDK4 complexes are major integrators of various mitogenenic and antimitogenic signals. Also a substrate for SMAD3, phosphorylating SMAD3 in a cell-cycle-dependent manner and repressing its transcriptional activity. Component of the ternary complex, cyclin D1/CDK4/CDKN1B, required for nuclear translocation and activity of the cyclin D-CDK4 complex. Exhibits transcriptional corepressor activity with INSM1 on the NEUROD1 and INS promoters in a cell cycle-independent manner. This Homo sapiens (Human) protein is G1/S-specific cyclin-D1.